Consider the following 670-residue polypeptide: MSAETVNNYDYSDWYENAAPTKAPVEVIPPCDPTADEGLFHICIAAISLVVMLVLAILARRQKLSDNQRGLTGLLSPVNFLDHTQHKGLAVAVYGVLFCKLVGMVLSHHPLPFTKEVANKEFWMILALLYYPALYYPLLACGTLHNKVGYVLGSLLSWTHFGILVWQKVDCPKTPQIYKYYALFGSLPQIACLAFLSFQYPLLLFKGLQNTETANASEDLSSSYYRDYVKKILKKKKPTKISSSTSKPKLFDRLRDAVKSYIYTPEDVFRFPLKLAISVVVAFIALYQMALLLISGVLPTLHIVRRGVDENIAFLLAGFNIILSNDRQEVVRIVVYYLWCVEICYVSAVTLSCLVNLLMLMRSMVLHRSNLKGLYRGDSLNVFNCHRSIRPSRPALVCWMGFTSYQAAFLCLGMAIQTLVFFICILFAVFLIIIPILWGTNLMLFHIIGNLWPFWLTLVLAALIQHVASRFLFIRKDGGTRDLNNRGSLFLLSYILFLVNVMIGVVLGIWRVVITALFNIVHLGRLDISLLNRNVEAFDPGYRCYSHYLKIEVSQSHPVMKAFCGLLLQSSGQDGLSAQRIRDAEEGIQLVQQEKKQNKVSNAKRARAHWQLLYTLVNNPSLVGSRKHFQCQSSESFINGALSRTSKEGSKKDGSVNEPSKEAESAAASN.

The Extracellular segment spans residues 1–38; sequence MSAETVNNYDYSDWYENAAPTKAPVEVIPPCDPTADEG. The helical transmembrane segment at 39-59 threads the bilayer; the sequence is LFHICIAAISLVVMLVLAILA. Residues 60 to 87 lie on the Cytoplasmic side of the membrane; the sequence is RRQKLSDNQRGLTGLLSPVNFLDHTQHK. A helical membrane pass occupies residues 88 to 108; sequence GLAVAVYGVLFCKLVGMVLSH. Topologically, residues 109–121 are extracellular; it reads HPLPFTKEVANKE. A helical transmembrane segment spans residues 122 to 142; that stretch reads FWMILALLYYPALYYPLLACG. Residues 143-145 lie on the Cytoplasmic side of the membrane; the sequence is TLH. Residues 146–166 form a helical membrane-spanning segment; the sequence is NKVGYVLGSLLSWTHFGILVW. The Extracellular portion of the chain corresponds to 167 to 182; the sequence is QKVDCPKTPQIYKYYA. A helical membrane pass occupies residues 183 to 203; sequence LFGSLPQIACLAFLSFQYPLL. The Cytoplasmic segment spans residues 204–274; it reads LFKGLQNTET…PEDVFRFPLK (71 aa). A helical membrane pass occupies residues 275–295; it reads LAISVVVAFIALYQMALLLIS. Residues 296–346 lie on the Extracellular side of the membrane; that stretch reads GVLPTLHIVRRGVDENIAFLLAGFNIILSNDRQEVVRIVVYYLWCVEICYV. A helical membrane pass occupies residues 347 to 367; sequence SAVTLSCLVNLLMLMRSMVLH. Residues 368–401 are Cytoplasmic-facing; sequence RSNLKGLYRGDSLNVFNCHRSIRPSRPALVCWMG. Residues 402–422 form a helical membrane-spanning segment; it reads FTSYQAAFLCLGMAIQTLVFF. Topologically, residues 423 to 452 are extracellular; it reads ICILFAVFLIIIPILWGTNLMLFHIIGNLW. Residues 453-473 form a helical membrane-spanning segment; the sequence is PFWLTLVLAALIQHVASRFLF. The Cytoplasmic segment spans residues 474-488; it reads IRKDGGTRDLNNRGS. The helical intramembrane region spans 489 to 526; sequence LFLLSYILFLVNVMIGVVLGIWRVVITALFNIVHLGRL. Residues 527-670 lie on the Cytoplasmic side of the membrane; that stretch reads DISLLNRNVE…KEAESAAASN (144 aa). The segment at 600–626 is interaction with calmodulin; it reads VSNAKRARAHWQLLYTLVNNPSLVGSR. The interval 640-670 is disordered; sequence GALSRTSKEGSKKDGSVNEPSKEAESAAASN. Basic and acidic residues predominate over residues 645–664; the sequence is TSKEGSKKDGSVNEPSKEAE.

As to quaternary structure, homodimer. Interacts (via C-terminus) with calmodulin.

The protein localises to the cell membrane. In terms of biological role, retinol transporter. Accepts retinol from the extracellular retinol-binding protein rbp4, mediates retinol transport across the cell membrane, and then transmits retinol to the cytoplasmic retinol-binding protein rbp1. Required for normal vitamin A homeostasis. In Danio rerio (Zebrafish), this protein is Receptor for retinol uptake stra6.